Consider the following 353-residue polypeptide: Histidinol-phosphate aminotransferase (353 aa).

At K218 the chain carries N6-(pyridoxal phosphate)lysine.

It belongs to the class-II pyridoxal-phosphate-dependent aminotransferase family. Histidinol-phosphate aminotransferase subfamily. In terms of assembly, homodimer. It depends on pyridoxal 5'-phosphate as a cofactor.

It catalyses the reaction L-histidinol phosphate + 2-oxoglutarate = 3-(imidazol-4-yl)-2-oxopropyl phosphate + L-glutamate. It participates in amino-acid biosynthesis; L-histidine biosynthesis; L-histidine from 5-phospho-alpha-D-ribose 1-diphosphate: step 7/9. The polypeptide is Histidinol-phosphate aminotransferase (Synechococcus sp. (strain JA-2-3B'a(2-13)) (Cyanobacteria bacterium Yellowstone B-Prime)).